A 1285-amino-acid polypeptide reads, in one-letter code: DNA polymerase II large subunit (1285 aa).

Positions 565 to 586 (TRIGGRMGRPGKSKPREMRPPP) are disordered.

Belongs to the archaeal DNA polymerase II family. Heterodimer of a large subunit and a small subunit. This protein undergoes a protein self splicing that involves a post-translational excision of the intervening region (intein) followed by peptide ligation.

The catalysed reaction is DNA(n) + a 2'-deoxyribonucleoside 5'-triphosphate = DNA(n+1) + diphosphate. It catalyses the reaction Exonucleolytic cleavage in the 3'- to 5'-direction to yield nucleoside 5'-phosphates.. Functionally, possesses two activities: a DNA synthesis (polymerase) and an exonucleolytic activity that degrades single-stranded DNA in the 3'- to 5'-direction. Has a template-primer preference which is characteristic of a replicative DNA polymerase. The chain is DNA polymerase II large subunit from Methanoculleus marisnigri (strain ATCC 35101 / DSM 1498 / JR1).